The chain runs to 464 residues: Soluble pyridine nucleotide transhydrogenase (464 aa).

Position 35-44 (35-44 (DSRRQVGGNC)) interacts with FAD.

This sequence belongs to the class-I pyridine nucleotide-disulfide oxidoreductase family. It depends on FAD as a cofactor.

The protein resides in the cytoplasm. It catalyses the reaction NAD(+) + NADPH = NADH + NADP(+). In terms of biological role, conversion of NADPH, generated by peripheral catabolic pathways, to NADH, which can enter the respiratory chain for energy generation. The protein is Soluble pyridine nucleotide transhydrogenase of Pseudomonas syringae pv. syringae (strain B728a).